The sequence spans 1241 residues: ATP-dependent helicase/nuclease subunit A (1241 aa).

Positions 12–485 constitute a UvrD-like helicase ATP-binding domain; the sequence is SQWTDDQWKA…IDLAKNFRSR (474 aa). Residue 33-40 coordinates ATP; the sequence is AAAGSGKT. In terms of domain architecture, UvrD-like helicase C-terminal spans 505-805; it reads GEIDYDADAE…RIMTIHKSKG (301 aa).

This sequence belongs to the helicase family. AddA subfamily. In terms of assembly, heterodimer of AddA and AddB/RexB. Mg(2+) serves as cofactor.

It catalyses the reaction Couples ATP hydrolysis with the unwinding of duplex DNA by translocating in the 3'-5' direction.. The enzyme catalyses ATP + H2O = ADP + phosphate + H(+). The heterodimer acts as both an ATP-dependent DNA helicase and an ATP-dependent, dual-direction single-stranded exonuclease. Recognizes the chi site generating a DNA molecule suitable for the initiation of homologous recombination. The AddA nuclease domain is required for chi fragment generation; this subunit has the helicase and 3' -&gt; 5' nuclease activities. This chain is ATP-dependent helicase/nuclease subunit A, found in Bacillus cereus (strain ATCC 10987 / NRS 248).